The chain runs to 672 residues: UvrABC system protein B (672 aa).

One can recognise a Helicase ATP-binding domain in the interval 26–181 (AGLEDGLAYQ…ILQRLAELQY (156 aa)). 39–46 (GVTGSGKT) is a binding site for ATP. The short motif at 92 to 115 (YYDYYQPEAYVPSSDTYIEKDASI) is the Beta-hairpin element. The 163-residue stretch at 430-592 (QVDDLLSEIK…ITPKSIQKAV (163 aa)) folds into the Helicase C-terminal domain. One can recognise a UVR domain in the interval 631–666 (AKELRKLEEQMYHHARNLEFEEAAAVRDKIQHIRKG).

This sequence belongs to the UvrB family. In terms of assembly, forms a heterotetramer with UvrA during the search for lesions. Interacts with UvrC in an incision complex.

Its subcellular location is the cytoplasm. The UvrABC repair system catalyzes the recognition and processing of DNA lesions. A damage recognition complex composed of 2 UvrA and 2 UvrB subunits scans DNA for abnormalities. Upon binding of the UvrA(2)B(2) complex to a putative damaged site, the DNA wraps around one UvrB monomer. DNA wrap is dependent on ATP binding by UvrB and probably causes local melting of the DNA helix, facilitating insertion of UvrB beta-hairpin between the DNA strands. Then UvrB probes one DNA strand for the presence of a lesion. If a lesion is found the UvrA subunits dissociate and the UvrB-DNA preincision complex is formed. This complex is subsequently bound by UvrC and the second UvrB is released. If no lesion is found, the DNA wraps around the other UvrB subunit that will check the other stand for damage. The polypeptide is UvrABC system protein B (Coxiella burnetii (strain CbuG_Q212) (Coxiella burnetii (strain Q212))).